The sequence spans 490 residues: Glutamyl-tRNA(Gln) amidotransferase subunit A (490 aa).

Catalysis depends on charge relay system residues Lys76 and Ser151. Ser175 acts as the Acyl-ester intermediate in catalysis.

It belongs to the amidase family. GatA subfamily. In terms of assembly, heterotrimer of A, B and C subunits.

It carries out the reaction L-glutamyl-tRNA(Gln) + L-glutamine + ATP + H2O = L-glutaminyl-tRNA(Gln) + L-glutamate + ADP + phosphate + H(+). In terms of biological role, allows the formation of correctly charged Gln-tRNA(Gln) through the transamidation of misacylated Glu-tRNA(Gln) in organisms which lack glutaminyl-tRNA synthetase. The reaction takes place in the presence of glutamine and ATP through an activated gamma-phospho-Glu-tRNA(Gln). The sequence is that of Glutamyl-tRNA(Gln) amidotransferase subunit A from Aromatoleum aromaticum (strain DSM 19018 / LMG 30748 / EbN1) (Azoarcus sp. (strain EbN1)).